The sequence spans 68 residues: DNA-directed RNA polymerase subunit omega (68 aa).

This sequence belongs to the RNA polymerase subunit omega family. As to quaternary structure, the RNAP catalytic core consists of 2 alpha, 1 beta, 1 beta' and 1 omega subunit. When a sigma factor is associated with the core the holoenzyme is formed, which can initiate transcription.

The enzyme catalyses RNA(n) + a ribonucleoside 5'-triphosphate = RNA(n+1) + diphosphate. Its function is as follows. Promotes RNA polymerase assembly. Latches the N- and C-terminal regions of the beta' subunit thereby facilitating its interaction with the beta and alpha subunits. This is DNA-directed RNA polymerase subunit omega from Citrifermentans bemidjiense (strain ATCC BAA-1014 / DSM 16622 / JCM 12645 / Bem) (Geobacter bemidjiensis).